The following is a 358-amino-acid chain: Homoserine O-acetyltransferase (358 aa).

In terms of domain architecture, AB hydrolase-1 spans 41-343; that stretch reads NAVLICHALT…DYGHDAFLVD (303 aa). S143 acts as the Nucleophile in catalysis. R212 serves as a coordination point for substrate. Catalysis depends on residues D304 and H337. D338 provides a ligand contact to substrate.

It belongs to the AB hydrolase superfamily. MetX family. In terms of assembly, homodimer.

It localises to the cytoplasm. The enzyme catalyses L-homoserine + acetyl-CoA = O-acetyl-L-homoserine + CoA. It participates in amino-acid biosynthesis; L-methionine biosynthesis via de novo pathway; O-acetyl-L-homoserine from L-homoserine: step 1/1. In terms of biological role, transfers an acetyl group from acetyl-CoA to L-homoserine, forming acetyl-L-homoserine. The protein is Homoserine O-acetyltransferase of Haemophilus influenzae (strain 86-028NP).